The following is a 317-amino-acid chain: Glycine--tRNA ligase alpha subunit (317 aa).

It belongs to the class-II aminoacyl-tRNA synthetase family. As to quaternary structure, tetramer of two alpha and two beta subunits.

It localises to the cytoplasm. The catalysed reaction is tRNA(Gly) + glycine + ATP = glycyl-tRNA(Gly) + AMP + diphosphate. This Lactococcus lactis subsp. cremoris (strain SK11) protein is Glycine--tRNA ligase alpha subunit.